A 233-amino-acid chain; its full sequence is 2,3-bisphosphoglycerate-dependent phosphoglycerate mutase (233 aa).

Residues 8–15 (RHGESEWN), 21–22 (TG), Arg60, 87–90 (ERHY), Lys98, 114–115 (RR), and 183–184 (GN) each bind substrate. The active-site Tele-phosphohistidine intermediate is His9. Catalysis depends on Glu87, which acts as the Proton donor/acceptor.

Belongs to the phosphoglycerate mutase family. BPG-dependent PGAM subfamily.

It carries out the reaction (2R)-2-phosphoglycerate = (2R)-3-phosphoglycerate. The protein operates within carbohydrate degradation; glycolysis; pyruvate from D-glyceraldehyde 3-phosphate: step 3/5. In terms of biological role, catalyzes the interconversion of 2-phosphoglycerate and 3-phosphoglycerate. The protein is 2,3-bisphosphoglycerate-dependent phosphoglycerate mutase of Lactococcus lactis subsp. cremoris (strain MG1363).